A 561-amino-acid chain; its full sequence is Delta(24)-sterol reductase (561 aa).

Residues 1–25 (MSDLQTPLVRPKRKKTWVDYFVKFR) are Lumenal-facing. At S2 the chain carries Phosphoserine. A helical; Signal-anchor transmembrane segment spans residues 26–46 (WIIVIFIVLPFSATFYFLIYL). Residues 47–561 (GDMWSESKSF…HLETAYAEAD (515 aa)) lie on the Cytoplasmic side of the membrane. An FAD-binding PCMH-type domain is found at 49–232 (MWSESKSFEK…VAAEIRLIKV (184 aa)). Residues 518 to 539 (CRKKYRAIGTFMSVYYKSKKGR) form an interaction with calmodulin region.

This sequence belongs to the DIMINUTO family. As to quaternary structure, interacts with calmodulin.

The protein resides in the microsome membrane. It catalyses the reaction lathosterol + NADP(+) = 5alpha-cholesta-7,24-dien-3beta-ol + NADPH + H(+). Plays a critical role in the general process of plant cell elongation. Involved in the synthesis of campesterol, an early precursor of brassinolide. Required for the conversion of 24-methylenecholesterol to campesterol and for the conversion of isofucosterol to sitosterol. Necessary for both the isomerization and reduction of 24-methylenecholesterol. Regulates indirectly phytochrome-mediated light responses through the modulation of brassinosteroid biosynthesis. This chain is Delta(24)-sterol reductase (DIM), found in Arabidopsis thaliana (Mouse-ear cress).